The sequence spans 143 residues: UPF0251 protein CA_C3166 (143 aa).

It belongs to the UPF0251 family.

In Clostridium acetobutylicum (strain ATCC 824 / DSM 792 / JCM 1419 / IAM 19013 / LMG 5710 / NBRC 13948 / NRRL B-527 / VKM B-1787 / 2291 / W), this protein is UPF0251 protein CA_C3166.